We begin with the raw amino-acid sequence, 328 residues long: Malate dehydrogenase (328 aa).

An NAD(+)-binding site is contributed by 11–17 (GAAGQIG). Substrate contacts are provided by R94 and R100. Residues N107, Q114, and 131 to 133 (VGN) each bind NAD(+). Substrate is bound by residues N133 and R164. H189 acts as the Proton acceptor in catalysis.

This sequence belongs to the LDH/MDH superfamily. MDH type 2 family.

The enzyme catalyses (S)-malate + NAD(+) = oxaloacetate + NADH + H(+). Its function is as follows. Catalyzes the reversible oxidation of malate to oxaloacetate. This chain is Malate dehydrogenase, found in Acinetobacter baylyi (strain ATCC 33305 / BD413 / ADP1).